Consider the following 83-residue polypeptide: MSSGGLLLLLGLLTLWEVLTPVSSKDRPKFCELLPDTGSCEDFTGAFHYSTRDRECIEFIYGGCGGNANNFKTLEECESTCAA.

Residues 1 to 24 (MSSGGLLLLLGLLTLWEVLTPVSS) form the signal peptide. The BPTI/Kunitz inhibitor domain occupies 31–81 (CELLPDTGSCEDFTGAFHYSTRDRECIEFIYGGCGGNANNFKTLEECESTC). Intrachain disulfides connect C31–C81, C40–C64, and C56–C77.

The protein belongs to the venom Kunitz-type family. In terms of tissue distribution, expressed by the venom gland.

The protein resides in the secreted. Its function is as follows. Serine protease inhibitor. In Pseudonaja textilis textilis (Eastern brown snake), this protein is Kunitz-type serine protease inhibitor textilinin-7.